The chain runs to 286 residues: Bifunctional protein FolD (286 aa).

Residues 165–167, serine 190, and valine 231 each bind NADP(+); that span reads GRS.

This sequence belongs to the tetrahydrofolate dehydrogenase/cyclohydrolase family. As to quaternary structure, homodimer.

It catalyses the reaction (6R)-5,10-methylene-5,6,7,8-tetrahydrofolate + NADP(+) = (6R)-5,10-methenyltetrahydrofolate + NADPH. The enzyme catalyses (6R)-5,10-methenyltetrahydrofolate + H2O = (6R)-10-formyltetrahydrofolate + H(+). The protein operates within one-carbon metabolism; tetrahydrofolate interconversion. Catalyzes the oxidation of 5,10-methylenetetrahydrofolate to 5,10-methenyltetrahydrofolate and then the hydrolysis of 5,10-methenyltetrahydrofolate to 10-formyltetrahydrofolate. The sequence is that of Bifunctional protein FolD from Bacillus cereus (strain ATCC 14579 / DSM 31 / CCUG 7414 / JCM 2152 / NBRC 15305 / NCIMB 9373 / NCTC 2599 / NRRL B-3711).